The chain runs to 284 residues: Pantothenate synthetase (284 aa).

M30–H37 contributes to the ATP binding site. The Proton donor role is filled by H37. Q61 contributes to the (R)-pantoate binding site. Q61 contributes to the beta-alanine binding site. ATP is bound at residue G149–D152. Q155 is a binding site for (R)-pantoate. Residues V178 and M186 to R189 contribute to the ATP site.

The protein belongs to the pantothenate synthetase family. As to quaternary structure, homodimer.

The protein resides in the cytoplasm. It catalyses the reaction (R)-pantoate + beta-alanine + ATP = (R)-pantothenate + AMP + diphosphate + H(+). The protein operates within cofactor biosynthesis; (R)-pantothenate biosynthesis; (R)-pantothenate from (R)-pantoate and beta-alanine: step 1/1. Its function is as follows. Catalyzes the condensation of pantoate with beta-alanine in an ATP-dependent reaction via a pantoyl-adenylate intermediate. The chain is Pantothenate synthetase from Saccharophagus degradans (strain 2-40 / ATCC 43961 / DSM 17024).